Here is a 124-residue protein sequence, read N- to C-terminus: MTHDPYYETMYILRPDIPEEEVESHLTKYRDMLVEAGAEVLDNQMRGKRRLAYPIAKHKEGIYVQLSHNGDGQHVAVLEKAMRLSEDVIRYLTVKQEGPLPAPRVMPGSEAAQQQQAEAAASAD.

A disordered region spans residues 99 to 124 (PLPAPRVMPGSEAAQQQQAEAAASAD). A compositionally biased stretch (low complexity) spans 109–124 (SEAAQQQQAEAAASAD).

This sequence belongs to the bacterial ribosomal protein bS6 family.

Functionally, binds together with bS18 to 16S ribosomal RNA. This chain is Small ribosomal subunit protein bS6, found in Synechococcus sp. (strain CC9605).